Reading from the N-terminus, the 185-residue chain is ATP synthase subunit b, chloroplastic (185 aa).

A helical membrane pass occupies residues 27–49 (LATNPINLSVVLGVLIFFGKGVL).

It belongs to the ATPase B chain family. F-type ATPases have 2 components, F(1) - the catalytic core - and F(0) - the membrane proton channel. F(1) has five subunits: alpha(3), beta(3), gamma(1), delta(1), epsilon(1). F(0) has four main subunits: a(1), b(1), b'(1) and c(10-14). The alpha and beta chains form an alternating ring which encloses part of the gamma chain. F(1) is attached to F(0) by a central stalk formed by the gamma and epsilon chains, while a peripheral stalk is formed by the delta, b and b' chains.

Its subcellular location is the plastid. It localises to the chloroplast thylakoid membrane. F(1)F(0) ATP synthase produces ATP from ADP in the presence of a proton or sodium gradient. F-type ATPases consist of two structural domains, F(1) containing the extramembraneous catalytic core and F(0) containing the membrane proton channel, linked together by a central stalk and a peripheral stalk. During catalysis, ATP synthesis in the catalytic domain of F(1) is coupled via a rotary mechanism of the central stalk subunits to proton translocation. In terms of biological role, component of the F(0) channel, it forms part of the peripheral stalk, linking F(1) to F(0). In Vitis vinifera (Grape), this protein is ATP synthase subunit b, chloroplastic.